The primary structure comprises 37 residues: MKVRASVKPICEKCKVIKRKGVLRIICDNLKHKQRQK.

Belongs to the bacterial ribosomal protein bL36 family.

The sequence is that of Large ribosomal subunit protein bL36 from Borreliella afzelii (strain PKo) (Borrelia afzelii).